Here is a 169-residue protein sequence, read N- to C-terminus: FAM231A/C-like protein LOC102723383 (169 aa).

The disordered stretch occupies residues 82-140 (LIRSGSSQNESQEDQGAGLISQAGLKADNRRESSTWANEVEDRRPQCTPALNLTPSHPH).

Belongs to the FAM231 family.

This Homo sapiens (Human) protein is FAM231A/C-like protein LOC102723383.